Consider the following 912-residue polypeptide: Transcription factor bHLH140 (912 aa).

Residues 1 to 57 are disordered; it reads MDDFNLRSENPNSSSTTSSSSSSFHRHKSETGNTKRSRSTSTLSTDPQSVAARDRRH. A compositionally biased stretch (low complexity) spans 13 to 23; that stretch reads SSSTTSSSSSS. In terms of domain architecture, bHLH spans 43 to 92; it reads LSTDPQSVAARDRRHRISDRFKILQSMVPGGAKMDTVSMLDEAISYVKFL. 234-241 is an ATP binding site; the sequence is GPPGSGKS. In terms of domain architecture, Macro spans 511-690; sequence KAKASQKNID…KYKGSQDKAV (180 aa). The segment covering 657-666 has biased composition (polar residues); it reads PKRSSQTAVS. The interval 657 to 706 is disordered; the sequence is PKRSSQTAVSDSGEDIKEDSERNKKYKGSQDKAVTNNLESESLEDTRGSG. In terms of domain architecture, HIT spans 720–829; sequence LHSIAMHPER…SQDFNSDSLK (110 aa). The C2H2-type zinc finger occupies 870-893; that stretch reads LRCNRCRSAHPNIPKLKSHVRSCH.

In terms of assembly, homodimer.

Its subcellular location is the nucleus. This is Transcription factor bHLH140 (BHLH140) from Arabidopsis thaliana (Mouse-ear cress).